The following is a 154-amino-acid chain: Crossover junction endodeoxyribonuclease RuvC (154 aa).

Catalysis depends on residues Asp7, Glu67, and Asp139. Mg(2+) is bound by residues Asp7, Glu67, and Asp139.

It belongs to the RuvC family. Homodimer which binds Holliday junction (HJ) DNA. The HJ becomes 2-fold symmetrical on binding to RuvC with unstacked arms; it has a different conformation from HJ DNA in complex with RuvA. In the full resolvosome a probable DNA-RuvA(4)-RuvB(12)-RuvC(2) complex forms which resolves the HJ. Mg(2+) is required as a cofactor.

Its subcellular location is the cytoplasm. The enzyme catalyses Endonucleolytic cleavage at a junction such as a reciprocal single-stranded crossover between two homologous DNA duplexes (Holliday junction).. Functionally, the RuvA-RuvB-RuvC complex processes Holliday junction (HJ) DNA during genetic recombination and DNA repair. Endonuclease that resolves HJ intermediates. Cleaves cruciform DNA by making single-stranded nicks across the HJ at symmetrical positions within the homologous arms, yielding a 5'-phosphate and a 3'-hydroxyl group; requires a central core of homology in the junction. The consensus cleavage sequence is 5'-(A/T)TT(C/G)-3'. Cleavage occurs on the 3'-side of the TT dinucleotide at the point of strand exchange. HJ branch migration catalyzed by RuvA-RuvB allows RuvC to scan DNA until it finds its consensus sequence, where it cleaves and resolves the cruciform DNA. This is Crossover junction endodeoxyribonuclease RuvC from Parasynechococcus marenigrum (strain WH8102).